The primary structure comprises 316 residues: Transaldolase 1 (316 aa).

Residue Lys131 is the Schiff-base intermediate with substrate of the active site.

The protein belongs to the transaldolase family. Type 1 subfamily. Homodimer.

It is found in the cytoplasm. The enzyme catalyses D-sedoheptulose 7-phosphate + D-glyceraldehyde 3-phosphate = D-erythrose 4-phosphate + beta-D-fructose 6-phosphate. The protein operates within carbohydrate degradation; pentose phosphate pathway; D-glyceraldehyde 3-phosphate and beta-D-fructose 6-phosphate from D-ribose 5-phosphate and D-xylulose 5-phosphate (non-oxidative stage): step 2/3. Transaldolase is important for the balance of metabolites in the pentose-phosphate pathway. The chain is Transaldolase 1 from Pectobacterium atrosepticum (strain SCRI 1043 / ATCC BAA-672) (Erwinia carotovora subsp. atroseptica).